Reading from the N-terminus, the 356-residue chain is Tyrosine recombinase XerS (356 aa).

Residues 16–121 (LMPWYVLEYY…ALSSLYKYLT (106 aa)) enclose the Core-binding (CB) domain. The region spanning 169–354 (GFLTYIDQEH…VSDEQKNALD (186 aa)) is the Tyr recombinase domain. Catalysis depends on residues Arg-210, Lys-234, His-306, Arg-309, and His-332. The O-(3'-phospho-DNA)-tyrosine intermediate role is filled by Tyr-341.

Belongs to the 'phage' integrase family. XerS subfamily.

It is found in the cytoplasm. With respect to regulation, ftsK is required for recombination. Its function is as follows. Site-specific tyrosine recombinase, which acts by catalyzing the cutting and rejoining of the recombining DNA molecules. Essential to convert dimers of the bacterial chromosome into monomers to permit their segregation at cell division. This chain is Tyrosine recombinase XerS, found in Streptococcus pneumoniae serotype 4 (strain ATCC BAA-334 / TIGR4).